Consider the following 152-residue polypeptide: UPF0266 membrane protein YobD (152 aa).

Helical transmembrane passes span 6–26, 45–65, and 67–87; these read LVLI…QFIM, VDSV…VTSH, and AQMT…IFWI.

Belongs to the UPF0266 family.

Its subcellular location is the cell inner membrane. In Salmonella arizonae (strain ATCC BAA-731 / CDC346-86 / RSK2980), this protein is UPF0266 membrane protein YobD.